Reading from the N-terminus, the 108-residue chain is DNA-binding protein HBbu (108 aa).

It belongs to the bacterial histone-like protein family.

In terms of biological role, histone-like DNA-binding protein which is capable of wrapping DNA to stabilize it, and thus to prevent its denaturation under extreme environmental conditions. The sequence is that of DNA-binding protein HBbu (hbb) from Borrelia parkeri.